We begin with the raw amino-acid sequence, 523 residues long: Na(+)/H(+) antiporter NhaB (523 aa).

10 helical membrane-spanning segments follow: residues 28 to 48, 51 to 71, 89 to 109, 137 to 157, 237 to 257, 302 to 322, 347 to 367, 390 to 410, 445 to 465, and 476 to 496; these read FLII…WLLV, FIFT…GLLA, LSAN…IYFV, MAAF…VISI, FFIR…ATCV, AIIC…VGLI, TESL…AVII, LFYI…VGTV, VATP…LAPL, and MALP…MYLL.

Belongs to the NhaB Na(+)/H(+) (TC 2.A.34) antiporter family.

The protein resides in the cell inner membrane. The catalysed reaction is 2 Na(+)(in) + 3 H(+)(out) = 2 Na(+)(out) + 3 H(+)(in). Functionally, na(+)/H(+) antiporter that extrudes sodium in exchange for external protons. In Tolumonas auensis (strain DSM 9187 / NBRC 110442 / TA 4), this protein is Na(+)/H(+) antiporter NhaB.